The chain runs to 131 residues: Small ribosomal subunit protein uS8 (131 aa).

Belongs to the universal ribosomal protein uS8 family. In terms of assembly, part of the 30S ribosomal subunit. Contacts proteins S5 and S12.

Its function is as follows. One of the primary rRNA binding proteins, it binds directly to 16S rRNA central domain where it helps coordinate assembly of the platform of the 30S subunit. The polypeptide is Small ribosomal subunit protein uS8 (Burkholderia ambifaria (strain MC40-6)).